A 343-amino-acid polypeptide reads, in one-letter code: MNKVFSDFLAWTREHEWGCDESYNLTLSNGTKLSVWDSGVLEVSPASPGHKDVVLSCAVHGNETAPIEICRDIINDIIDEKQTVTHRTLFLIANPASINKGERFVEENMNRLFSGEHGKGSTQNKERERAAKMENYVERFYQSAPEGSRERFHYDLHTAIRDSKREKFAVYPFTHGAPYSRQQLQFLLACGVDTVLLNQAPTTTFSYFSARQFNAHAFTVELGKVRPFGENDRAKFAAAETTLRDLISQTELDFGPFEPEQHYVFKEAQTINRTQPDFELNFADDVANFTSFNKGELLAWDGDKACYAQHDGEHIIFPNAKVALGHRALLTVVRVPTESLDLV.

Zn(2+) contacts are provided by His-60, Glu-63, and His-157. The active site involves Glu-221.

This sequence belongs to the AspA/AstE family. Succinylglutamate desuccinylase subfamily. Zn(2+) is required as a cofactor.

The enzyme catalyses N-succinyl-L-glutamate + H2O = L-glutamate + succinate. Its pathway is amino-acid degradation; L-arginine degradation via AST pathway; L-glutamate and succinate from L-arginine: step 5/5. Transforms N(2)-succinylglutamate into succinate and glutamate. This chain is Succinylglutamate desuccinylase, found in Idiomarina loihiensis (strain ATCC BAA-735 / DSM 15497 / L2-TR).